Here is a 57-residue protein sequence, read N- to C-terminus: UPF0391 membrane protein RPA3505 (57 aa).

2 consecutive transmembrane segments (helical) span residues 4–24 (WVVT…GGIA) and 30–50 (IAKI…VISI).

It belongs to the UPF0391 family.

The protein localises to the cell membrane. The sequence is that of UPF0391 membrane protein RPA3505 from Rhodopseudomonas palustris (strain ATCC BAA-98 / CGA009).